Reading from the N-terminus, the 351-residue chain is Ion-translocating oxidoreductase complex subunit D (351 aa).

4 helical membrane-spanning segments follow: residues 18 to 38, 40 to 60, 87 to 107, and 121 to 141; these read IMLL…YFFG, GSLI…GAVL, LPPL…IVIA, and PAMV…TSWL. Thr-185 carries the post-translational modification FMN phosphoryl threonine. 5 helical membrane passes run 211-231, 241-261, 264-284, 298-318, and 320-340; these read VLAG…GLLL, IPVS…MIAP, FASP…FFIA, LIFG…GGYP, and GVAF…HYTQ.

It belongs to the NqrB/RnfD family. The complex is composed of six subunits: RnfA, RnfB, RnfC, RnfD, RnfE and RnfG. Requires FMN as cofactor.

It localises to the cell inner membrane. Part of a membrane-bound complex that couples electron transfer with translocation of ions across the membrane. This is Ion-translocating oxidoreductase complex subunit D from Yersinia pseudotuberculosis serotype O:1b (strain IP 31758).